The chain runs to 260 residues: UPF0246 protein Bcep18194_A5551 (260 aa).

The protein belongs to the UPF0246 family.

This chain is UPF0246 protein Bcep18194_A5551, found in Burkholderia lata (strain ATCC 17760 / DSM 23089 / LMG 22485 / NCIMB 9086 / R18194 / 383).